Reading from the N-terminus, the 581-residue chain is MSLFTFVQIRVFPFLQRHLFFLQLSLTLIGLSWIFILPRNEIIDRLHVSESALLPGQVNTYFENRYSKTVSSSLTAANTWSHLDASVGTNTMYDDLEQIFTAMGLPTQKQNYSINIPGSEFNGSNFITTLRAPRGDATESLLLCVPWKDHIGQYNEAGVALAISLLKYFQGWSLWSKDIILVIFDDPVYGPSSFLTSYFDQTTPYISYTPLKIRSGSIQAGLSLELVTTENNSDVLEVLYQATNGQLPNLDLFNTISRIFMQHFNYPLRLQGYDFHANSGSSYTSRLKSLWMGMLTQAVSNVTSAHALFPQYRIDMLTLRMKVKDPFSFDMFRFGQAIESTFRSLNNLLEHLHQSFFFYFILDHLHFISIGNYMPSILILAASFMLGAYRHWINHEKKIDLWRPFSFWLFSIFCTIAAYYLVSSSTKITVFIFLYLMLTFIGIIFSTFMTSEDAELVLSYDLMSKSLFISVVSTLNFSLSFVVAILLVPLQFISFRFNRRLSLLFAVLTYFSTFIFLCSLSKILNGPLVPFWLWAKEYELFNSWLMPSVFMILVLPEIIFSVTSFFSLWNEPSVKTKTKTL.

Residues 1–17 (MSLFTFVQIRVFPFLQR) are Cytoplasmic-facing. Residues 18 to 38 (HLFFLQLSLTLIGLSWIFILP) form a helical membrane-spanning segment. The Lumenal portion of the chain corresponds to 39–366 (RNEIIDRLHV…FFYFILDHLH (328 aa)). A helical membrane pass occupies residues 367–387 (FISIGNYMPSILILAASFMLG). Residues 388–403 (AYRHWINHEKKIDLWR) lie on the Cytoplasmic side of the membrane. The helical transmembrane segment at 404–424 (PFSFWLFSIFCTIAAYYLVSS) threads the bilayer. The Lumenal portion of the chain corresponds to 425 to 427 (STK). Residues 428 to 448 (ITVFIFLYLMLTFIGIIFSTF) form a helical membrane-spanning segment. Topologically, residues 449-467 (MTSEDAELVLSYDLMSKSL) are cytoplasmic. The chain crosses the membrane as a helical span at residues 468–488 (FISVVSTLNFSLSFVVAILLV). Over 489–500 (PLQFISFRFNRR) the chain is Lumenal. Residues 501–521 (LSLLFAVLTYFSTFIFLCSLS) traverse the membrane as a helical segment. Over 522–548 (KILNGPLVPFWLWAKEYELFNSWLMPS) the chain is Cytoplasmic. A helical transmembrane segment spans residues 549–569 (VFMILVLPEIIFSVTSFFSLW). The Lumenal segment spans residues 570–581 (NEPSVKTKTKTL). A Prevents secretion from ER motif is present at residues 577 to 581 (KTKTL).

It localises to the endoplasmic reticulum membrane. It functions in the pathway glycolipid biosynthesis; glycosylphosphatidylinositol-anchor biosynthesis. Functionally, component of the GPI transamidase complex. Required for a terminal step of GPI anchor attachment onto proteins. In Schizosaccharomyces pombe (strain 972 / ATCC 24843) (Fission yeast), this protein is GPI transamidase component gaa1 (gaa1).